Reading from the N-terminus, the 130-residue chain is Small ribosomal subunit protein uS11 (130 aa).

This sequence belongs to the universal ribosomal protein uS11 family. As to quaternary structure, part of the 30S ribosomal subunit. Interacts with proteins S7 and S18. Binds to IF-3.

Functionally, located on the platform of the 30S subunit, it bridges several disparate RNA helices of the 16S rRNA. Forms part of the Shine-Dalgarno cleft in the 70S ribosome. In Thermotoga petrophila (strain ATCC BAA-488 / DSM 13995 / JCM 10881 / RKU-1), this protein is Small ribosomal subunit protein uS11.